A 520-amino-acid polypeptide reads, in one-letter code: Amphoterin-induced protein 2 (520 aa).

The signal sequence occupies residues 1 to 37 (MSLRFHTLPTLPRAVKPGCRELLCLLVIAVMVSPSSS). The region spanning 38 to 67 (GLCPTACICATDIVSCTNKNLSKVPGNLFR) is the LRRNT domain. At 38–398 (GLCPTACICA…SHHAHEAFNT (361 aa)) the chain is on the extracellular side. 2 cysteine pairs are disulfide-bonded: Cys-40–Cys-46 and Cys-44–Cys-53. Asn-57 is a glycosylation site (N-linked (GlcNAc...) asparagine). 6 LRR repeats span residues 68–89 (LIKR…WIPV), 93–114 (KLST…SFST), 117–138 (NLKC…MFQE), 141–162 (VLEV…AFGG), 165–186 (HLQK…LYVG), and 192–213 (DLTF…HINL). A glycan (N-linked (GlcNAc...) asparagine) is linked at Asn-103. Positions 227-283 (NPFVCDCSLYSLLTFWYRRHFNSVTDFKHDYTCRLWLDSRHSHQLLLLQDSFLNCSH) constitute an LRRCT domain. Intrachain disulfides connect Cys-231–Cys-259 and Cys-233–Cys-281. N-linked (GlcNAc...) asparagine glycans are attached at residues Asn-280, Asn-287, Asn-344, Asn-372, Asn-380, Asn-383, and Asn-387. In terms of domain architecture, Ig-like C2-type spans 288 to 378 (GSFHALGFIH…RLLNETVDIM (91 aa)). The cysteines at positions 309 and 362 are disulfide-linked. The chain crosses the membrane as a helical span at residues 399–419 (AFTTLAACVVSIVLVLLYLYL). At 420-520 (TPCPCKCRDK…FSDTPFVAST (101 aa)) the chain is on the cytoplasmic side. Disordered regions lie at residues 437–458 (QSNA…AEDR) and 498–520 (SRAK…VAST).

It belongs to the immunoglobulin superfamily. AMIGO family. Binds itself as well as AMIGO1 and AMIGO3. In terms of tissue distribution, highest levels in the lung. High levels in cerebellar granule neurons and Purkinje cells. Also in pyramidal cells between CA1 and CA3 regions of the hippocampus and granule cells of the dentate gyrus.

Its subcellular location is the cell membrane. It localises to the nucleus. Functionally, required for depolarization-dependent survival of cultured cerebellar granule neurons. May mediate homophilic as well as heterophilic cell-cell interaction with AMIGO1 or AMIGO3. May contribute to signal transduction through its intracellular domain. This Rattus norvegicus (Rat) protein is Amphoterin-induced protein 2.